A 270-amino-acid polypeptide reads, in one-letter code: Putative carbamate hydrolase RutD (270 aa).

Belongs to the AB hydrolase superfamily. Hydrolase RutD family.

The catalysed reaction is carbamate + 2 H(+) = NH4(+) + CO2. Functionally, involved in pyrimidine catabolism. May facilitate the hydrolysis of carbamate, a reaction that can also occur spontaneously. This chain is Putative carbamate hydrolase RutD, found in Escherichia coli (strain SMS-3-5 / SECEC).